The following is a 536-amino-acid chain: Thiamine transport system permease protein ThiP (536 aa).

The next 12 helical transmembrane spans lie at 12-32 (WLIPGVSATTLVVAVALAAFL), 58-78 (FSFWQAFLSALLSVIPAIFLA), 95-115 (LCAMTLILPVLVAVFGILSVY), 134-154 (FSPYGLQGILLAHVFFNLPMA), 199-219 (VAALIFMLCFASFATVLSLGG), 240-260 (PARAAMLALLQMVCCLGLVLL), 293-313 (VLIVLALLLLLPPLLAVIVDG), 334-354 (SLRIALAAGVLCVVLTMMLLW), 374-394 (SGMLILAMPGIVLATGFFLLL), 404-424 (ADGIVIFTNALMAIPYALKVL), 463-483 (AQALAFACVLSIGDFGVVALF), and 506-526 (DGAVTALILLLLCFLLFTVIE). Residues 56–261 (VRFSFWQAFL…VCCLGLVLLS (206 aa)) form the ABC transmembrane type-1 1 domain. Residues 331–525 (LWTSLRIALA…LLCFLLFTVI (195 aa)) form the ABC transmembrane type-1 2 domain.

This sequence belongs to the binding-protein-dependent transport system permease family. CysTW subfamily. As to quaternary structure, the complex is composed of two ATP-binding proteins (ThiQ), two transmembrane proteins (ThiP) and a solute-binding protein (ThiB).

It localises to the cell inner membrane. With respect to regulation, transport is inhibited by the sulfhydryl-specific modifier N-ethylmaleimide. Functionally, part of the ABC transporter complex ThiBPQ involved in thiamine import. Probably responsible for the translocation of the substrate across the membrane. This is Thiamine transport system permease protein ThiP (thiP) from Escherichia coli (strain K12).